We begin with the raw amino-acid sequence, 562 residues long: Dihydroxy-acid dehydratase 1 (562 aa).

Mg(2+) is bound at residue D80. C121 provides a ligand contact to [2Fe-2S] cluster. Residues D122 and K123 each coordinate Mg(2+). K123 carries the post-translational modification N6-carboxylysine. C194 is a [2Fe-2S] cluster binding site. A Mg(2+)-binding site is contributed by E446. S472 acts as the Proton acceptor in catalysis.

This sequence belongs to the IlvD/Edd family. Homodimer. The cofactor is [2Fe-2S] cluster. Mg(2+) serves as cofactor.

It catalyses the reaction (2R)-2,3-dihydroxy-3-methylbutanoate = 3-methyl-2-oxobutanoate + H2O. The enzyme catalyses (2R,3R)-2,3-dihydroxy-3-methylpentanoate = (S)-3-methyl-2-oxopentanoate + H2O. It functions in the pathway amino-acid biosynthesis; L-isoleucine biosynthesis; L-isoleucine from 2-oxobutanoate: step 3/4. It participates in amino-acid biosynthesis; L-valine biosynthesis; L-valine from pyruvate: step 3/4. Functionally, functions in the biosynthesis of branched-chain amino acids. Catalyzes the dehydration of (2R,3R)-2,3-dihydroxy-3-methylpentanoate (2,3-dihydroxy-3-methylvalerate) into 2-oxo-3-methylpentanoate (2-oxo-3-methylvalerate) and of (2R)-2,3-dihydroxy-3-methylbutanoate (2,3-dihydroxyisovalerate) into 2-oxo-3-methylbutanoate (2-oxoisovalerate), the penultimate precursor to L-isoleucine and L-valine, respectively. The chain is Dihydroxy-acid dehydratase 1 from Staphylococcus saprophyticus subsp. saprophyticus (strain ATCC 15305 / DSM 20229 / NCIMB 8711 / NCTC 7292 / S-41).